Here is a 272-residue protein sequence, read N- to C-terminus: Type III pantothenate kinase (272 aa).

Residue 6-13 (DVRNTHTV) participates in ATP binding. Substrate is bound at residue 109–112 (GADR). Catalysis depends on aspartate 111, which acts as the Proton acceptor. A K(+)-binding site is contributed by aspartate 131. Residue serine 134 coordinates ATP. Residue threonine 186 participates in substrate binding.

Belongs to the type III pantothenate kinase family. In terms of assembly, homodimer. The cofactor is NH4(+). Requires K(+) as cofactor.

Its subcellular location is the cytoplasm. The catalysed reaction is (R)-pantothenate + ATP = (R)-4'-phosphopantothenate + ADP + H(+). It functions in the pathway cofactor biosynthesis; coenzyme A biosynthesis; CoA from (R)-pantothenate: step 1/5. Functionally, catalyzes the phosphorylation of pantothenate (Pan), the first step in CoA biosynthesis. The polypeptide is Type III pantothenate kinase (Mycobacterium ulcerans (strain Agy99)).